The chain runs to 216 residues: Probable GTP-binding protein EngB (216 aa).

In terms of domain architecture, EngB-type G spans 37–214; that stretch reads GSVEIAFAGR…RAAMIRLLDE (178 aa). GTP-binding positions include 45–52, 72–76, 92–95, 159–162, and 193–195; these read GRSNVGKS, GRTQE, DMPG, TKAD, and TSS. S52 and T74 together coordinate Mg(2+).

The protein belongs to the TRAFAC class TrmE-Era-EngA-EngB-Septin-like GTPase superfamily. EngB GTPase family. It depends on Mg(2+) as a cofactor.

Functionally, necessary for normal cell division and for the maintenance of normal septation. This chain is Probable GTP-binding protein EngB, found in Rhodopseudomonas palustris (strain TIE-1).